Consider the following 69-residue polypeptide: Large ribosomal subunit protein bL32c (69 aa).

The protein belongs to the bacterial ribosomal protein bL32 family.

Its subcellular location is the plastid. It is found in the chloroplast. This Anthoceros angustus (Hornwort) protein is Large ribosomal subunit protein bL32c (rpl32).